The sequence spans 507 residues: Branchpoint-bridging protein (507 aa).

A compositionally biased stretch (polar residues) spans 84 to 93; sequence DLNPPTSRYR. The disordered stretch occupies residues 84-110; sequence DLNPPTSRYRSLSPPPVYDSQGKRTNT. The KH domain maps to 154–220; sequence YIPINDYPEI…NMNEPLHCVI (67 aa). CCHC-type zinc fingers lie at residues 272–289 and 297–314; these read RPCP…ECSS and VICQ…DCTS. The segment at 307–507 is disordered; sequence HAARDCTSPL…PPPPPPPPSS (201 aa). Basic and acidic residues predominate over residues 319-336; that stretch reads FGKRTSDGPEFRETKKLQ. Over residues 345 to 376 the composition is skewed to low complexity; it reads PVGSHPSAPGSGSANSGVAPASLHPPGTMAPP. Pro residues-rich tracts occupy residues 390 to 412 and 440 to 449; these read TLPP…PVAL and EGPPAPPQTA. Residues 450–469 are compositionally biased toward low complexity; that stretch reads PPLRQTAATASSAGSSQSAQ. Residues 484–507 are compositionally biased toward pro residues; the sequence is PGPPAAVLPPPPPPPPPPPPPPSS.

This sequence belongs to the BBP/SF1 family.

The protein resides in the nucleus. Its function is as follows. Necessary for the splicing of pre-mRNA. Has a role in the recognition of the branch site (5'-UACUAAC-3'), the pyrimidine tract and the 3'-splice site at the 3'-end of introns. This is Branchpoint-bridging protein (BBP) from Eremothecium gossypii (strain ATCC 10895 / CBS 109.51 / FGSC 9923 / NRRL Y-1056) (Yeast).